The primary structure comprises 302 residues: MEGSEDEEAEAGGPLQQLVKRQRREKRELQAKIQGMKNAVPKNDKKRRKQLAEEVAKLEAELEQKHKEELKQLKEAMPEQNKIDSIADGVANFELEGREQQIQHPRISKAQKRREKKAALEKEREERIAEAEIENLTGARHLESQKLASLLAARHLEIKQIPSDGHCMYRAIEDQLKDHHNSWTVATLRNQTAKYIHSHFDDFLPFLTNPNTGDMYSKEEFEKYCDDIANTAAWGGQLELRALSHILQTPIEVVQMDSPSIIVGEEYSGKPIILVYMRHAYGLGEHYNSVKLLTDATTENGS.

Acidic residues predominate over residues 1–10 (MEGSEDEEAE). 2 disordered regions span residues 1 to 52 (MEGS…KQLA) and 99 to 121 (EQQIQHPRISKAQKRREKKAALE). Residues 106–116 (RISKAQKRREK) are compositionally biased toward basic residues. Positions 156–293 (LEIKQIPSDG…GEHYNSVKLL (138 aa)) constitute an OTU domain. The tract at residues 161–167 (IPSDGHC) is cys-loop. Residue Asp164 is part of the active site. Cys167 acts as the Nucleophile in catalysis. Residues 228–238 (IANTAAWGGQL) form a variable-loop region. Positions 276–286 (YMRHAYGLGEH) are his-loop. The active site involves His286.

It carries out the reaction Thiol-dependent hydrolysis of ester, thioester, amide, peptide and isopeptide bonds formed by the C-terminal Gly of ubiquitin (a 76-residue protein attached to proteins as an intracellular targeting signal).. In terms of biological role, deubiquitinating enzyme that may play a role in the ubiquitin-dependent regulation of different cellular processes. The sequence is that of Deubiquitinase OTUD6B (OTUD6B) from Gallus gallus (Chicken).